The sequence spans 452 residues: Protein CLT3, chloroplastic (452 aa).

A chloroplast-targeting transit peptide spans 1-34 (MATTSRRFTTGLFASITSVKSHSANRPQSISLIR). A run of 10 helical transmembrane segments spans residues 105–125 (AEIVIWAAVTAAFGVGNRVMY), 137–157 (FFLAQLSTFGYVAVYYTILYF), 175–195 (PFLIVGILEALAAAAGMAAAA), 202–222 (TTVLSQTFLVWQIFFSIIFLG), 230–250 (ILGCTLVALGVIVSVASGSGA), 258–278 (GVLWILLMVLSFLLQGAGTVL), 307–327 (FQAICIALLLPFLSKLWGIPF), 353–373 (GAPFLPLLFVIMNIGYNIALL), 389–409 (TVSVPIAVFLFTMPLPYLGVA), and 412–432 (LPKGFMGGTIILVLGMILYSW).

This sequence belongs to the CRT-like transporter family.

The protein resides in the plastid. It localises to the chloroplast membrane. In terms of biological role, involved in thiol transport from the plastid to the cytosol. Transports probably both glutathione (GSH) and its precursor, gamma-glutamylcysteine (gamma-EC). Exhibits some functional redundancy with CLT1 in maintaining the root GSH pool. The polypeptide is Protein CLT3, chloroplastic (Arabidopsis thaliana (Mouse-ear cress)).